A 1239-amino-acid polypeptide reads, in one-letter code: DNA polymerase subunit gamma-1 (1239 aa).

A disordered region spans residues 1–68; that stretch reads MSRLLWRKVA…PQVLSSEGGQ (68 aa). Low complexity-rich tracts occupy residues 9-36 and 44-60; these read VAGA…SDPS and QQQQ…QQPQ. The interval 43-55 is does not contribute to polymerase and exonuclease enzymatic activities; the sequence is QQQQQQQQQQQQQ. An Exo I motif is present at residues 196–200; sequence VFDVE. The active-site Exonuclease activity is D198. The short motif at 267–275 is the Exo II element; that stretch reads VGHNVSFDR. S306 is a DNA binding site. The tract at residues 318 to 340 is disordered; the sequence is GKHKVQPPTKQGQKSQRKARRGP. The Exo III signature appears at 395–403; that stretch reads YCAQDVWAT. Residues 506–531 form a disordered region; it reads EPATASKLPIEGAGAPGDPMDQEDLG. The tract at residues 510–571 is accessory-interacting determinant; it reads ASKLPIEGAG…RPQHLPGHPG (62 aa). RNA is bound at residue R579. S593 provides a ligand contact to DNA. RNA is bound by residues H754, G763, and K768. Positions 806 and 849 each coordinate DNA. The interval 858–864 is trigger loop; that stretch reads TWLTASN. RNA contacts are provided by S863 and R869. The short motif at 887–896 is the Pol A element; it reads VGADVDSQEL. Residues D890, V891, S893, E895, R943, K947, and Y951 each contribute to the a 2'-deoxyribonucleoside 5'-triphosphate site. Residues D890 and V891 each contribute to the Mg(2+) site. The short motif at 943 to 958 is the Pol B element; the sequence is REHAKIFNYGRIYGAG. Residues T1094 and S1095 each contribute to the DNA site. The Pol C motif lies at 1134-1141; the sequence is HDEVRYLV. Residue D1135 participates in a 2'-deoxyribonucleoside 5'-triphosphate binding. Mg(2+) is bound at residue D1135.

Belongs to the DNA polymerase type-A family. As to quaternary structure, heterotrimer composed of a catalytic subunit and a homodimer of accessory subunits (POLG:POLG2). Interacts with TTC3. Interacts with LIG3. Mg(2+) serves as cofactor.

The protein localises to the mitochondrion. Its subcellular location is the mitochondrion matrix. It is found in the mitochondrion nucleoid. It catalyses the reaction DNA(n) + a 2'-deoxyribonucleoside 5'-triphosphate = DNA(n+1) + diphosphate. It carries out the reaction a 3'-end 2'-deoxyribonucleotidyl-deoxyribonucleotide-DNA + H2O = a 3'-end 2'-deoxyribonucleotide-DNA + a 2'-deoxyribonucleoside 5'-phosphate + H(+). The enzyme catalyses a 5'-end 2'-deoxyribose-2'-deoxyribonucleotide-DNA = (2E,4S)-4-hydroxypenten-2-al-5-phosphate + a 5'-end 5'-phospho-2'-deoxyribonucleoside-DNA + H(+). With respect to regulation, inhibited by dideoxynucleotides such as antiviral agent zalcitabine. Functionally, catalytic subunit of DNA polymerase gamma solely responsible for replication of mitochondrial DNA (mtDNA). Replicates both heavy and light strands of the circular mtDNA genome using a single-stranded DNA template, RNA primers and the four deoxyribonucleoside triphosphates as substrates. Has 5' -&gt; 3' polymerase activity. Functionally interacts with TWNK and SSBP1 at the replication fork to form a highly processive replisome, where TWNK unwinds the double-stranded DNA template prior to replication and SSBP1 covers the parental heavy strand to enable continuous replication of the entire mitochondrial genome. A single nucleotide incorporation cycle includes binding of the incoming nucleotide at the insertion site, a phosphodiester bond formation reaction that extends the 3'-end of the primer DNA, and translocation of the primer terminus to the post-insertion site. After completing replication of a mtDNA strand, mediates 3' -&gt; 5' exonucleolytic degradation at the nick to enable proper ligation. Highly accurate due to high nucleotide selectivity and 3' -&gt; 5' exonucleolytic proofreading. Proficiently corrects base substitutions, single-base additions and deletions in non-repetitive sequences and short repeats, but displays lower proofreading activity when replicating longer homopolymeric stretches. Exerts exonuclease activity toward single-stranded DNA and double-stranded DNA containing 3'-terminal mispairs. When a misincorporation occurs, transitions from replication to a pro-nucleolytic editing mode and removes the missincorporated nucleoside in the exonuclease active site. Proceeds via an SN2 nucleolytic mechanism in which Asp-198 catalyzes phosphodiester bond hydrolysis and Glu-200 stabilizes the leaving group. As a result the primer strand becomes one nucleotide shorter and is positioned in the post-insertion site, ready to resume DNA synthesis. Exerts 5'-deoxyribose phosphate (dRP) lyase activity and mediates repair-associated mtDNA synthesis (gap filling) in base-excision repair pathway. Catalyzes the release of the 5'-terminal 2-deoxyribose-5-phosphate sugar moiety from incised apurinic/apyrimidinic (AP) sites to produce a substrate for DNA ligase. The dRP lyase reaction does not require divalent metal ions and likely proceeds via a Schiff base intermediate in a beta-elimination reaction mechanism. The chain is DNA polymerase subunit gamma-1 from Homo sapiens (Human).